The primary structure comprises 196 residues: 3-isopropylmalate dehydratase small subunit (196 aa).

It belongs to the LeuD family. LeuD type 1 subfamily. Heterodimer of LeuC and LeuD.

It carries out the reaction (2R,3S)-3-isopropylmalate = (2S)-2-isopropylmalate. It functions in the pathway amino-acid biosynthesis; L-leucine biosynthesis; L-leucine from 3-methyl-2-oxobutanoate: step 2/4. Its function is as follows. Catalyzes the isomerization between 2-isopropylmalate and 3-isopropylmalate, via the formation of 2-isopropylmaleate. The protein is 3-isopropylmalate dehydratase small subunit of Corynebacterium efficiens (strain DSM 44549 / YS-314 / AJ 12310 / JCM 11189 / NBRC 100395).